Here is a 622-residue protein sequence, read N- to C-terminus: Probable potassium transport system protein Kup 1 (622 aa).

Helical transmembrane passes span 11–31, 50–70, 101–121, 137–157, 168–188, 215–235, 247–267, 285–305, 337–357, 366–386, 393–413, and 419–439; these read LTLGAIGVVYGDIGTSVLYAV, ILSIFFWTLTIIVSLKYVTLV, VLLLVGIFGTCLFYGDGVITP, PAFNKFVIPLTLLVLFGLFWV, FFGPITVVWFACIAVLGVAQI, FIILGAVVLCVTGAEALYADL, WFAVVMPALTLNYFGQGALLL, ALLPLVGLATLATVIASQALI, IYLPFVNWGLFVTIVLAVMIF, AYGIAVCTDMLITTILTFFVI, PLWLCVAATSFFFVVDFAFWA, and LFDGGWFPLLIGGAIFILMIT.

Belongs to the HAK/KUP transporter (TC 2.A.72) family.

The protein resides in the cell inner membrane. It catalyses the reaction K(+)(in) + H(+)(in) = K(+)(out) + H(+)(out). Its function is as follows. Transport of potassium into the cell. Likely operates as a K(+):H(+) symporter. The polypeptide is Probable potassium transport system protein Kup 1 (Albidiferax ferrireducens (strain ATCC BAA-621 / DSM 15236 / T118) (Rhodoferax ferrireducens)).